The chain runs to 604 residues: Aspartate--tRNA(Asp/Asn) ligase (604 aa).

Glu169 provides a ligand contact to L-aspartate. An aspartate region spans residues Gln193–Lys196. L-aspartate is bound at residue Arg215. ATP is bound by residues Arg215–Glu217 and Gln224. L-aspartate is bound at residue His456. Glu490 is a binding site for ATP. Residue Arg497 participates in L-aspartate binding. Gly542 to Arg545 contributes to the ATP binding site. The interval Pro571–Ala604 is disordered.

The protein belongs to the class-II aminoacyl-tRNA synthetase family. Type 1 subfamily. In terms of assembly, homodimer.

Its subcellular location is the cytoplasm. It carries out the reaction tRNA(Asx) + L-aspartate + ATP = L-aspartyl-tRNA(Asx) + AMP + diphosphate. Its function is as follows. Aspartyl-tRNA synthetase with relaxed tRNA specificity since it is able to aspartylate not only its cognate tRNA(Asp) but also tRNA(Asn). Reaction proceeds in two steps: L-aspartate is first activated by ATP to form Asp-AMP and then transferred to the acceptor end of tRNA(Asp/Asn). The protein is Aspartate--tRNA(Asp/Asn) ligase of Micrococcus luteus (strain ATCC 4698 / DSM 20030 / JCM 1464 / CCM 169 / CCUG 5858 / IAM 1056 / NBRC 3333 / NCIMB 9278 / NCTC 2665 / VKM Ac-2230) (Micrococcus lysodeikticus).